Consider the following 334-residue polypeptide: Ornithine carbamoyltransferase (334 aa).

Carbamoyl phosphate is bound by residues 57–60 (STRT), Gln84, Arg108, and 135–138 (HPTQ). L-ornithine is bound by residues Asn169, Asp233, and 237-238 (SM). Carbamoyl phosphate is bound by residues 275 to 276 (CL) and Arg320.

It belongs to the aspartate/ornithine carbamoyltransferase superfamily. OTCase family.

It is found in the cytoplasm. It carries out the reaction carbamoyl phosphate + L-ornithine = L-citrulline + phosphate + H(+). It participates in amino-acid biosynthesis; L-arginine biosynthesis; L-arginine from L-ornithine and carbamoyl phosphate: step 1/3. Reversibly catalyzes the transfer of the carbamoyl group from carbamoyl phosphate (CP) to the N(epsilon) atom of ornithine (ORN) to produce L-citrulline. The polypeptide is Ornithine carbamoyltransferase (Vibrio cholerae serotype O1 (strain ATCC 39315 / El Tor Inaba N16961)).